The following is a 121-amino-acid chain: Large ribosomal subunit protein uL14c (121 aa).

It belongs to the universal ribosomal protein uL14 family. In terms of assembly, part of the 50S ribosomal subunit.

It localises to the plastid. Its subcellular location is the chloroplast. Functionally, binds to 23S rRNA. This is Large ribosomal subunit protein uL14c from Trieres chinensis (Marine centric diatom).